The chain runs to 392 residues: Acetyl-CoA acetyltransferase (392 aa).

The Acyl-thioester intermediate role is filled by C85. CoA is bound by residues C206, S207, V209, and K332. H336 functions as the Proton acceptor in the catalytic mechanism.

It belongs to the thiolase-like superfamily. Thiolase family. As to quaternary structure, interacts with HMG-CoA synthase (HMGCS) that catalyzes the second step in the pathway and with a DUF35 protein. The acetoacetyl-CoA thiolase/HMG-CoA synthase complex channels the intermediate via a fused CoA-binding site, which allows for efficient coupling of the endergonic thiolase reaction with the exergonic HMGCS reaction.

The enzyme catalyses 2 acetyl-CoA = acetoacetyl-CoA + CoA. It functions in the pathway metabolic intermediate biosynthesis; (R)-mevalonate biosynthesis; (R)-mevalonate from acetyl-CoA: step 1/3. Its function is as follows. Catalyzes the condensation of two acetyl-coA molecules into acetoacetyl-CoA. Functions in the mevalonate (MVA) pathway leading to isopentenyl diphosphate (IPP), a key precursor for the biosynthesis of isoprenoid compounds that are building blocks of archaeal membrane lipids. The sequence is that of Acetyl-CoA acetyltransferase from Methanocaldococcus jannaschii (strain ATCC 43067 / DSM 2661 / JAL-1 / JCM 10045 / NBRC 100440) (Methanococcus jannaschii).